The chain runs to 588 residues: Cyclomaltodextrinase (588 aa).

H247 and R326 together coordinate substrate. Catalysis depends on D328, which acts as the Nucleophile. E357 acts as the Proton donor in catalysis. Substrate contacts are provided by residues 423–424, D468, and R472; that span reads HD.

This sequence belongs to the glycosyl hydrolase 13 family. Exists as a monomer or a homodimer in solution. Homodimer is more active and stable than the monomer.

The catalysed reaction is cyclomaltodextrin + H2O = linear maltodextrin. Its activity is regulated as follows. No metal dependence, but Mn(2+) increases the activity with alpha-cyclodextrin as substrate. No effect on the activity with presence or absence of Ca(2+), Zn(2+), Tween-20 or EDTA. Hydrolyzes alpha-, beta- and gamma-cyclodextrins with the highest activity with alpha-cyclodextrin (cyclomaltohexaose). Pullulan is the preferred substrate from linear substrates. Maltose is a major product of these reactions. Is also able to hydrolyze maltotriose and acarbose, and transglycosylate their hydrolytic products. Major reaction products of maltotriose and of acarbose are maltose and glucose, and glucose and pseudotrisaccharide, respectively. No activity with glucose or maltose as substrate. The polypeptide is Cyclomaltodextrinase (Geobacillus thermopakistaniensis (strain MAS1)).